Reading from the N-terminus, the 406-residue chain is Transposase for insertion sequence element IS1001 (406 aa).

This sequence belongs to the transposase 12 family.

In terms of biological role, involved in the transposition of the insertion sequence. The polypeptide is Transposase for insertion sequence element IS1001 (tnpA) (Bordetella parapertussis).